A 596-amino-acid chain; its full sequence is CRISPR-associated DNA-binding protein Cas12m (596 aa).

Positions 19–53 (EVLRQQLWLAHNLREDLVSLQLAYDDDLKAIWSSY) are recognition domain (REC1-N). A recognition domain (REC2) region spans residues 54-121 (PDVAQAEDTM…RDAIAVVKDD (68 aa)). Coiled-coil stretches lie at residues 55 to 83 (DVAQ…ARIE) and 91 to 117 (TELT…AIAV). The interval 122–190 (AAERRKARSD…LRHHRFDGSG (69 aa)) is recognition domain (REC1-C). The interval 191 to 302 (TIAVQLQRQA…RAKLCVTARI (112 aa)) is wedge domain (WED). The tract at residues 303–313 (GDTEPVTSGPT) is linker. A ruvC-I region spans residues 314 to 541 (VALHLGWRST…RDGVPVTIVA (228 aa)). Residue His317 coordinates Mg(2+). The target nucleic-acid binding (TNB) stretch occupies residues 541–577 (AAADFTRTHSRCGHVNPADDRYLSNPVRCDGCGAMYD). 4 residues coordinate Zn(2+): His549, Cys552, Cys569, and Cys572. The tract at residues 578–596 (QDRSFVTLMLRAATAPSNP) is ruvC-II. Asp579 contacts Mg(2+).

Belongs to the CRISPR-associated DNA-binding protein Cas12m family. As to quaternary structure, binds crRNA and target dsDNA as a monomer. The cofactor is Mg(2+). Zn(2+) serves as cofactor.

CRISPR (clustered regularly interspaced short palindromic repeat), is an adaptive immune system that provides protection against mobile genetic elements (viruses, transposable elements and conjugative plasmids). CRISPR clusters contain sequences complementary to antecedent mobile elements and target invading nucleic acids. CRISPR clusters are transcribed and processed into CRISPR RNA (crRNA). Recognizes a short motif in the CRISPR repeat sequences (the 5' PAM or protospacer adjacent motif, 5'-TTN-3' in this organism) to help distinguish self versus nonself, as targets within the bacterial CRISPR locus do not have PAMs. Upon expression in E.coli as a CRISPR locus inhibits plasmid propagation when targeted to regions essential for plasmid propagation (replication origin and dnaA). The crRNA-Cas12m complex inhibits transcription from target DNA leading to gene silencing. Cas12m-crRNA binds DNA in a PAM-dependent, crRNA-guided fashion. Binds a 17-bp crRNA-ss-target DNA heteroduplex, in a 56 nucleotide crRNA. No dsDNA, ssDNA or RNA nuclease activity is seen for the crRNA-Cas12m complex. Is required to process pre-crRNA to mature crRNA without a tracrRNA. Upon expression in E.coli as a CRISPR region preferentially binds to its associated crRNA. The protein is CRISPR-associated DNA-binding protein Cas12m of Mycolicibacterium mucogenicum (Mycobacterium mucogenicum).